We begin with the raw amino-acid sequence, 345 residues long: Holliday junction branch migration complex subunit RuvB (345 aa).

The large ATPase domain (RuvB-L) stretch occupies residues 1 to 186 (MSTDPDEREV…FGFTAHMDFY (186 aa)). ATP is bound by residues leucine 25, arginine 26, glycine 67, lysine 70, threonine 71, serine 72, 133-135 (EDF), arginine 176, tyrosine 186, and arginine 223. Threonine 71 contributes to the Mg(2+) binding site. The tract at residues 187–257 (EPAELERVLV…VAKAALAVYD (71 aa)) is small ATPAse domain (RuvB-S). The segment at 260–345 (ELGLDRLDRA…AGANQPGLFE (86 aa)) is head domain (RuvB-H). The DNA site is built by arginine 315 and arginine 320.

This sequence belongs to the RuvB family. In terms of assembly, homohexamer. Forms an RuvA(8)-RuvB(12)-Holliday junction (HJ) complex. HJ DNA is sandwiched between 2 RuvA tetramers; dsDNA enters through RuvA and exits via RuvB. An RuvB hexamer assembles on each DNA strand where it exits the tetramer. Each RuvB hexamer is contacted by two RuvA subunits (via domain III) on 2 adjacent RuvB subunits; this complex drives branch migration. In the full resolvosome a probable DNA-RuvA(4)-RuvB(12)-RuvC(2) complex forms which resolves the HJ.

It localises to the cytoplasm. The catalysed reaction is ATP + H2O = ADP + phosphate + H(+). Its function is as follows. The RuvA-RuvB-RuvC complex processes Holliday junction (HJ) DNA during genetic recombination and DNA repair, while the RuvA-RuvB complex plays an important role in the rescue of blocked DNA replication forks via replication fork reversal (RFR). RuvA specifically binds to HJ cruciform DNA, conferring on it an open structure. The RuvB hexamer acts as an ATP-dependent pump, pulling dsDNA into and through the RuvAB complex. RuvB forms 2 homohexamers on either side of HJ DNA bound by 1 or 2 RuvA tetramers; 4 subunits per hexamer contact DNA at a time. Coordinated motions by a converter formed by DNA-disengaged RuvB subunits stimulates ATP hydrolysis and nucleotide exchange. Immobilization of the converter enables RuvB to convert the ATP-contained energy into a lever motion, pulling 2 nucleotides of DNA out of the RuvA tetramer per ATP hydrolyzed, thus driving DNA branch migration. The RuvB motors rotate together with the DNA substrate, which together with the progressing nucleotide cycle form the mechanistic basis for DNA recombination by continuous HJ branch migration. Branch migration allows RuvC to scan DNA until it finds its consensus sequence, where it cleaves and resolves cruciform DNA. The protein is Holliday junction branch migration complex subunit RuvB of Mycobacterium ulcerans (strain Agy99).